A 426-amino-acid chain; its full sequence is Glutamyl-tRNA reductase (426 aa).

Residues 52-55 (TCNR), Ser110, 115-117 (EYE), and Gln121 contribute to the substrate site. The active-site Nucleophile is Cys53. 190–195 (GAGEMA) contributes to the NADP(+) binding site.

Belongs to the glutamyl-tRNA reductase family. Homodimer.

The enzyme catalyses (S)-4-amino-5-oxopentanoate + tRNA(Glu) + NADP(+) = L-glutamyl-tRNA(Glu) + NADPH + H(+). Its pathway is porphyrin-containing compound metabolism; protoporphyrin-IX biosynthesis; 5-aminolevulinate from L-glutamyl-tRNA(Glu): step 1/2. Catalyzes the NADPH-dependent reduction of glutamyl-tRNA(Glu) to glutamate 1-semialdehyde (GSA). The protein is Glutamyl-tRNA reductase of Saccharolobus solfataricus (strain ATCC 35092 / DSM 1617 / JCM 11322 / P2) (Sulfolobus solfataricus).